A 482-amino-acid polypeptide reads, in one-letter code: UDP-N-acetylmuramoyl-L-alanyl-D-glutamate--2,6-diaminopimelate ligase 1 (482 aa).

Position 30 (Ser30) interacts with UDP-N-acetyl-alpha-D-muramoyl-L-alanyl-D-glutamate. 110–116 provides a ligand contact to ATP; the sequence is GTNGKTT. UDP-N-acetyl-alpha-D-muramoyl-L-alanyl-D-glutamate is bound by residues 152–153, Ser179, and Arg187; that span reads TT. At Lys219 the chain carries N6-carboxylysine. Meso-2,6-diaminopimelate contacts are provided by residues Arg378, 402–405, Gly452, and Glu456; that span reads DNPR. A Meso-diaminopimelate recognition motif motif is present at residues 402–405; that stretch reads DNPR.

The protein belongs to the MurCDEF family. MurE subfamily. Mg(2+) is required as a cofactor. Carboxylation is probably crucial for Mg(2+) binding and, consequently, for the gamma-phosphate positioning of ATP.

The protein resides in the cytoplasm. The enzyme catalyses UDP-N-acetyl-alpha-D-muramoyl-L-alanyl-D-glutamate + meso-2,6-diaminopimelate + ATP = UDP-N-acetyl-alpha-D-muramoyl-L-alanyl-gamma-D-glutamyl-meso-2,6-diaminopimelate + ADP + phosphate + H(+). The protein operates within cell wall biogenesis; peptidoglycan biosynthesis. Its function is as follows. Catalyzes the addition of meso-diaminopimelic acid to the nucleotide precursor UDP-N-acetylmuramoyl-L-alanyl-D-glutamate (UMAG) in the biosynthesis of bacterial cell-wall peptidoglycan. The protein is UDP-N-acetylmuramoyl-L-alanyl-D-glutamate--2,6-diaminopimelate ligase 1 of Clostridium acetobutylicum (strain ATCC 824 / DSM 792 / JCM 1419 / IAM 19013 / LMG 5710 / NBRC 13948 / NRRL B-527 / VKM B-1787 / 2291 / W).